An 803-amino-acid chain; its full sequence is Translation initiation factor IF-2 (803 aa).

Disordered regions lie at residues 95–125 (PVVE…EKAE) and 138–178 (EVKE…EREE). Polar residues predominate over residues 111–121 (VPLTSDTTNLN). The segment covering 138–155 (EVKEEAKKTPSEKKETPK) has biased composition (basic and acidic residues). Residues 156–167 (KGPRKETRRSRK) are compositionally biased toward basic residues. Positions 168 to 178 (PDKEDKWEREE) are enriched in basic and acidic residues. The 170-residue stretch at 302–471 (PRAPVVTIMG…LLQAEVLELK (170 aa)) folds into the tr-type G domain. The interval 311-318 (GHVDHGKT) is G1. 311–318 (GHVDHGKT) is a GTP binding site. The segment at 336–340 (GITQH) is G2. The segment at 357–360 (DTPG) is G3. Residues 357 to 361 (DTPGH) and 411 to 414 (NKID) each bind GTP. Residues 411 to 414 (NKID) are G4. A G5 region spans residues 447–449 (SAK).

It belongs to the TRAFAC class translation factor GTPase superfamily. Classic translation factor GTPase family. IF-2 subfamily.

It localises to the cytoplasm. Its function is as follows. One of the essential components for the initiation of protein synthesis. Protects formylmethionyl-tRNA from spontaneous hydrolysis and promotes its binding to the 30S ribosomal subunits. Also involved in the hydrolysis of GTP during the formation of the 70S ribosomal complex. The protein is Translation initiation factor IF-2 of Coxiella burnetii (strain Dugway 5J108-111).